We begin with the raw amino-acid sequence, 200 residues long: MRSPTLGVMFNHDALPSEHALRYLKAHLRNVPDFPKPGILFKDITPLLADPRALHITLDLLAQRFVGEHVDVVVGVESRGFIFGGALSARLNASFVPVRKPGKLPAATDRVAYALEYGTAELEMHKGSIRPGARVLIVDDLLATGGTASAAAELARKQGGEVAGFAFVVELDFLGGRALLAERAGDAAPVFSIVHFAAGE.

This sequence belongs to the purine/pyrimidine phosphoribosyltransferase family. In terms of assembly, homodimer.

It localises to the cytoplasm. The enzyme catalyses AMP + diphosphate = 5-phospho-alpha-D-ribose 1-diphosphate + adenine. Its pathway is purine metabolism; AMP biosynthesis via salvage pathway; AMP from adenine: step 1/1. In terms of biological role, catalyzes a salvage reaction resulting in the formation of AMP, that is energically less costly than de novo synthesis. The sequence is that of Adenine phosphoribosyltransferase from Sorangium cellulosum (strain So ce56) (Polyangium cellulosum (strain So ce56)).